A 305-amino-acid polypeptide reads, in one-letter code: Heme A synthase (305 aa).

Over 1 to 6 (MKKFLK) the chain is Cytoplasmic. The chain crosses the membrane as a helical span at residues 7 to 27 (VWSVLTIICMTVVVFGGALVT). Residues 28–63 (KTGSADGCGNSWPLCNGQLVRLTDVTPEKLIEFMHR) lie on the Extracellular side of the membrane. A disulfide bridge connects residues Cys-35 and Cys-42. Glu-59 is a catalytic residue. A heme o-binding site is contributed by His-62. A helical transmembrane segment spans residues 64–84 (MTTGISSIFVIVLAICAWIYM). Residues 85-92 (KNRRETKP) are Cytoplasmic-facing. A helical membrane pass occupies residues 93-113 (LAIIAVLFLIIQALMGMAAVV). Topologically, residues 114 to 122 (WGQNPYIMA) are extracellular. The helical transmembrane segment at 123-143 (LHFGISIICYASIVLLALMIF) threads the bilayer. Residue His-124 participates in heme o binding. The Cytoplasmic portion of the chain corresponds to 144–160 (EVDRKFDARNLVMGTKL). The chain crosses the membrane as a helical span at residues 161-181 (RINIYALTIYTYLAVYTGALV). The Extracellular segment spans residues 182–212 (RHEKASMAVPVWPFENGHFIMPTSVQDYVQY). The helical transmembrane segment at 213-233 (FHRLAAFILIVWLLYVTWLVF) threads the bilayer. His-214 is a heme b binding site. Topologically, residues 234–240 (RDYRRYR) are cytoplasmic. The helical transmembrane segment at 241–261 (VLTFSMVLSLVFIALQAVTGA) threads the bilayer. Topologically, residues 262–271 (LSVYTGVNLY) are extracellular. The helical transmembrane segment at 272-292 (IALAHSLIITMLFALLCYLCL) threads the bilayer. Residue His-276 coordinates heme b. Topologically, residues 293–305 (LASRSKSNRLRIK) are cytoplasmic.

It belongs to the COX15/CtaA family. Type 1 subfamily. Interacts with CtaB. Heme b serves as cofactor.

It localises to the cell membrane. The catalysed reaction is Fe(II)-heme o + 2 A + H2O = Fe(II)-heme a + 2 AH2. It participates in porphyrin-containing compound metabolism; heme A biosynthesis; heme A from heme O: step 1/1. Functionally, catalyzes the conversion of heme O to heme A by two successive hydroxylations of the methyl group at C8. The first hydroxylation forms heme I, the second hydroxylation results in an unstable dihydroxymethyl group, which spontaneously dehydrates, resulting in the formyl group of heme A. The chain is Heme A synthase from Listeria monocytogenes serotype 4b (strain F2365).